We begin with the raw amino-acid sequence, 2494 residues long: Polyprotein P1234 (2494 aa).

The region spanning 28 to 257 is the Alphavirus-like MT domain; that stretch reads EATQVTDNDH…EERILLRSWH (230 aa). Residues 242 to 261 are nsP1 membrane-binding; the sequence is GSTIYTEERILLRSWHLPNV. Residue cysteine 417 is the site of S-palmitoyl cysteine; by host attachment. The 166-residue stretch at 674–839 folds into the (+)RNA virus helicase ATP-binding domain; that stretch reads CVKKGDAGPM…HEICTEVYHK (166 aa). 719–726 is a binding site for a ribonucleoside 5'-triphosphate; that stretch reads GVPGSGKS. Positions 840-988 constitute a (+)RNA virus helicase C-terminal domain; that stretch reads SISRRCTKTV…LEEWQAEHDA (149 aa). Residues 1001–1320 enclose the Peptidase C9 domain; that stretch reads DVFQNKVNVC…VVLNNIYQGS (320 aa). Positions 1002-1021 are nucleolus localization signal; the sequence is VFQNKVNVCWAKALEPVLAT. Catalysis depends on cysteine 1010, which acts as the For cysteine protease nsP2 activity. The short motif at 1054–1063 is the Nuclear export signal element; that stretch reads TRFFGVDIDS. The active-site For cysteine protease nsP2 activity is histidine 1079. A Nuclear localization signal motif is present at residues 1177–1181; it reads PGKRV. Residues 1328-1486 enclose the Macro domain; that stretch reads APAYRVVRGD…RIKEAITRKE (159 aa). Positions 1337, 1351, 1359, 1438, 1439, and 1440 each coordinate ADP-D-ribose. Zn(2+) contacts are provided by cysteine 1589, cysteine 1591, cysteine 1614, and cysteine 1632. Disordered regions lie at residues 1667–1711 and 1764–1794; these read LVPR…ASSG and IPSI…GSHT. Residues 1671 to 1686 are compositionally biased toward pro residues; the sequence is RPAPPVPVPARIPSPP. A compositionally biased stretch (polar residues) spans 1687–1711; it reads CTSTNGSTTSIQSLGEDQSASASSG. Residues 1798-1810 form a binding to host G3BP family members region; that stretch reads LITFDSVAEILED. The interval 1858-1874 is binding to host FXR family members; that stretch reads PPGVARVISAAEFDEFV. In terms of domain architecture, RdRp catalytic spans 2252–2367; the sequence is AVLETDIASF…GVTSDALMAE (116 aa).

As to quaternary structure, interacts with non-structural protein 3. Interacts with RNA-directed RNA polymerase nsP4. Interacts with protease nsP2. interacts with itself. In terms of assembly, interacts with mRNA-capping enzyme nsP1. Interacts with host DDX1. Interacts with host DDX3. Interacts (via C-terminus) with host FXR1; this interaction inhibits the formation of host stress granules on viral mRNAs and the nsp3-FXR1 complexes bind viral RNAs and probably orchestrate the assembly of viral replication complexes. Interacts (via C-terminus) with host FXR2; this interaction inhibits the formation of host stress granules on viral mRNAs and the nsp3-FXR2 complexes bind viral RNAs and probably orchestrate the assembly of viral replication complexes. Interacts (via C-terminus) with host FMR1; this interaction inhibits the formation of host stress granules on viral mRNAs and the nsp3-FMR1 complexes bind viral RNAs and probably orchestrate the assembly of viral replication complexes. Interacts (via C-terminus) with host G3BP1; this interaction inhibits the formation of host stress granules on viral mRNAs and the nsp3-G3BP1 complexes bind viral RNAs and probably orchestrate the assembly of viral replication complexes. Interacts (via C-terminus) with host G3BP2; this interaction inhibits the formation of host stress granules on viral mRNAs and the nsp3-G3BP2 complexes bind viral RNAs and probably orchestrate the assembly of viral replication complexes. Interacts with mRNA-capping enzyme nsP1. Interacts with protease nsP2. interacts with itself. As to quaternary structure, interacts with RNA-directed RNA polymerase nsP4. Interacts with mRNA-capping enzyme nsP1. Interacts with KPNA1/karyopherin-alpha1; this interaction probably allows the active transport of protease nsP2 into the host nucleus. Mg(2+) is required as a cofactor. It depends on Mn(2+) as a cofactor. In terms of processing, specific enzymatic cleavages in vivo yield mature proteins. The processing of the polyprotein is temporally regulated. In early stages (1.7 hpi), P1234 is first cleaved in trans through its nsP2 protease activity, releasing P123' and nsP4, which associate to form the early replication complex. At the same time, P1234 is also cut at the nsP1/nsP2 site early in infection but with lower efficiency. After replication of the viral minus-strand RNAs (4 hpi), the polyproteins are cut at the nsP1/nsP2 and nsP2/nsP3 sites very efficiently, preventing accumulation of P123' and P1234 and allowing the formation of the late replication complex. NsP3'/nsP4 site is not cleaved anymore and P34 is produced rather than nsP4. Post-translationally, specific enzymatic cleavages in vivo yield mature proteins. The processing of the polyprotein is temporally regulated. In early stages (1.7 hpi), P123 is cleaved at the nsP1/nsP2 site with low efficiency. After replication of the viral minus-strand RNAs (4 hpi), the polyproteins are cut at the nsP1/nsP2 and nsP2/nsP3 sites very efficiently, preventing accumulation of P123 and allowing the formation of the late replication complex. Specific enzymatic cleavages in vivo yield mature proteins. The processing of the polyprotein is temporally regulated. In early stages (1.7 hpi), P123' is cleaved at the nsP1/nsP2 site with low efficiency. After replication of the viral minus-strand RNAs (4 hpi), the polyproteins are cut at the nsP1/nsP2 and nsP2/nsP3 sites very efficiently, preventing accumulation of P123' and allowing the formation of the late replication complex. In terms of processing, palmitoylated by host palmitoyltransferases ZDHHC2 and ZDHHC19. Post-translationally, phosphorylated by host on serines and threonines. Ubiquitinated; targets the protein for rapid degradation via the ubiquitin system. Nsp4 is present in extremely low quantities due to low frequency of translation through the amber stop-codon and the degradation by the ubiquitin pathway.

The protein resides in the host cytoplasmic vesicle membrane. It localises to the host cell membrane. Its subcellular location is the host cell projection. It is found in the host filopodium. The protein localises to the host nucleus. The protein resides in the host cytoplasm. It catalyses the reaction GTP + S-adenosyl-L-methionine = N(7)-methyl-GTP + S-adenosyl-L-homocysteine. It carries out the reaction N(7)-methyl-GTP + L-histidyl-[protein] = N(tele)-(N(7)-methylguanosine 5'-phospho)-L-histidyl-[protein] + diphosphate. The enzyme catalyses N(tele)-(N(7)-methylguanosine 5'-phospho)-L-histidyl-[protein] + a 5'-end diphospho-(purine-ribonucleoside) in mRNA + H(+) = a 5'-end (N(7)-methyl 5'-triphosphoguanosine)-(purine-ribonucleoside) in mRNA + L-histidyl-[protein]. The catalysed reaction is a 5'-end triphospho-ribonucleoside in mRNA + H2O = a 5'-end diphospho-ribonucleoside in mRNA + phosphate + H(+). It catalyses the reaction a ribonucleoside 5'-triphosphate + H2O = a ribonucleoside 5'-diphosphate + phosphate + H(+). It carries out the reaction ATP + H2O = ADP + phosphate + H(+). The enzyme catalyses RNA(n) + a ribonucleoside 5'-triphosphate = RNA(n+1) + diphosphate. The catalysed reaction is 4-O-(ADP-D-ribosyl)-L-aspartyl-[protein] + H2O = L-aspartyl-[protein] + ADP-D-ribose + H(+). It catalyses the reaction 5-O-(ADP-D-ribosyl)-L-glutamyl-[protein] + H2O = L-glutamyl-[protein] + ADP-D-ribose + H(+). It carries out the reaction RNA(n) + ATP = RNA(n)-3'-adenine ribonucleotide + diphosphate. The enzyme catalyses ADP-alpha-D-ribose 1''-phosphate + H2O = ADP-D-ribose + phosphate. Inhibited by sinefungin. Its function is as follows. Inactive precursor of the viral replicase, which is activated by cleavages carried out by the viral protease nsP2. Functionally, the early replication complex formed by the polyprotein P123 and nsP4 synthesizes the minus-strand RNAs (antigenome). Polyprotein P123 is a short-lived polyprotein that accumulates during early stage of infection. As soon P123 is cleaved into mature proteins, the plus-strand RNAs synthesis begins. The early replication complex formed by the polyprotein P123' and nsP4 synthesizes minus-strand RNAs (antigenome). Polyprotein P123' is a short-lived polyprotein that accumulates during early stage of infection. As soon P123' is cleaved into mature proteins, the plus-strand RNAs synthesis begins. In terms of biological role, cytoplasmic capping enzyme that catalyzes two virus-specific reactions: methyltransferase and nsP1 guanylyltransferase. mRNA-capping is necessary since all viral RNAs are synthesized in the cytoplasm, and host capping enzymes are restricted to the nucleus. The enzymatic reaction involves a covalent link between 7-methyl-GMP and nsP1, whereas eukaryotic capping enzymes form a covalent complex only with GMP. NsP1 capping consists in the following reactions: GTP is first methylated into 7-methyl-GMP and then is covalently linked to nsP1 to form the m7GMp-nsP1 complex from which 7-methyl-GMP complex is transferred to the mRNA to create the cap structure. NsP1 is also needed for the initiation of the minus-strand RNAs synthesis. Probably serves as a membrane anchor for the replication complex composed of nsP1-nsP4. Nsp1 is needed for the initiation of the minus-strand RNAs synthesis. Palmitoylated nsP1 is remodeling host cell cytoskeleton, and induces filopodium-like structure formation at the surface of the host cell. Its function is as follows. Multifunctional protein whose N-terminus is part of the RNA polymerase complex and displays NTPase, RNA triphosphatase and helicase activities. NTPase and RNA triphosphatase are involved in viral RNA capping and helicase keeps a check on the dsRNA replication intermediates. The C-terminus harbors a protease that specifically cleaves the polyproteins and releases the mature proteins. Required for the shutoff of minus-strand RNAs synthesis. Inhibits host translation to ensure maximal viral gene expression and evade host immune response. Functionally, seems to be essential for minus-strand RNAs and subgenomic 26S mRNAs synthesis. Displays mono-ADP-ribosylhydrolase activity. ADP-ribosylation is a post-translational modification that controls various processes of the host cell and the virus probably needs to revert it for optimal viral replication. Binds proteins of FXR and G3BP families and sequesters them into the viral RNA replication complexes thereby inhibiting the formation of host stress granules on viral mRNAs. The nsp3-FXR and nsp3-G3BP complexes bind viral RNAs and probably orchestrate the assembly of viral replication complexes, thanks to the ability of G3BP and FXR family members to self-assemble and bind DNA. Seems to be essential for minus-strand RNAs and subgenomic 26S mRNAs synthesis. Displays mono-ADP-ribosylhydrolase activity. ADP-ribosylation is a post-translational modification that controls various processes of the host cell and the virus probably needs to revert it for optimal viral replication. Binds proteins of FXR family and sequesters them into the viral RNA replication complexes thereby inhibiting the formation of host stress granules on viral mRNAs. The nsp3'-FXR complexes bind viral RNAs and probably orchestrate the assembly of viral replication complexes, thanks to the ability of FXR family members to self-assemble and bind DNA. In terms of biological role, RNA dependent RNA polymerase. Replicates genomic and antigenomic RNA by recognizing replications specific signals. The early replication complex formed by the polyprotein P123 and nsP4 synthesizes minus-strand RNAs. The late replication complex composed of fully processed nsP1-nsP4 is responsible for the production of genomic and subgenomic plus-strand RNAs. This Aedes (Human) protein is Polyprotein P1234.